Consider the following 545-residue polypeptide: Chaperonin GroEL 1 (545 aa).

ATP-binding positions include 30–33 (TLGP), Lys51, 87–91 (DGTTT), Gly415, and Asp495.

The protein belongs to the chaperonin (HSP60) family. Forms a cylinder of 14 subunits composed of two heptameric rings stacked back-to-back. Interacts with the co-chaperonin GroES.

Its subcellular location is the cytoplasm. It carries out the reaction ATP + H2O + a folded polypeptide = ADP + phosphate + an unfolded polypeptide.. In terms of biological role, together with its co-chaperonin GroES, plays an essential role in assisting protein folding. The GroEL-GroES system forms a nano-cage that allows encapsulation of the non-native substrate proteins and provides a physical environment optimized to promote and accelerate protein folding. The protein is Chaperonin GroEL 1 of Sinorhizobium medicae (strain WSM419) (Ensifer medicae).